Consider the following 179-residue polypeptide: ATP synthase subunit delta (179 aa).

This sequence belongs to the ATPase delta chain family. As to quaternary structure, F-type ATPases have 2 components, F(1) - the catalytic core - and F(0) - the membrane proton channel. F(1) has five subunits: alpha(3), beta(3), gamma(1), delta(1), epsilon(1). F(0) has three main subunits: a(1), b(2) and c(10-14). The alpha and beta chains form an alternating ring which encloses part of the gamma chain. F(1) is attached to F(0) by a central stalk formed by the gamma and epsilon chains, while a peripheral stalk is formed by the delta and b chains.

The protein localises to the cell membrane. F(1)F(0) ATP synthase produces ATP from ADP in the presence of a proton or sodium gradient. F-type ATPases consist of two structural domains, F(1) containing the extramembraneous catalytic core and F(0) containing the membrane proton channel, linked together by a central stalk and a peripheral stalk. During catalysis, ATP synthesis in the catalytic domain of F(1) is coupled via a rotary mechanism of the central stalk subunits to proton translocation. In terms of biological role, this protein is part of the stalk that links CF(0) to CF(1). It either transmits conformational changes from CF(0) to CF(1) or is implicated in proton conduction. This is ATP synthase subunit delta from Clostridium botulinum (strain Loch Maree / Type A3).